Consider the following 206-residue polypeptide: Transmembrane emp24 domain-containing protein bai (206 aa).

The first 17 residues, 1-17, serve as a signal peptide directing secretion; the sequence is MAKATFFYFLFIGYVWP. Residues 18–172 are Lumenal-facing; it reads IDSVMFNLAP…RDTNEKTNSR (155 aa). The 111-residue stretch at 30 to 140 folds into the GOLD domain; it reads QKCLKEDIQA…LKPLEVDLKR (111 aa). A helical transmembrane segment spans residues 173–193; the sequence is VLFFSIFSMCCLLGLATWQVL. At 194–206 the chain is on the cytoplasmic side; it reads YLRRYFKAKKLIE.

It belongs to the EMP24/GP25L family.

The protein resides in the membrane. Its function is as follows. Eca and bai are essential, though not redundant, for dorsoventral patterning of the embryo. Specifically required during early embryogenesis for the activity of maternal tkv, while the zygotic tkv is not affected. This is Transmembrane emp24 domain-containing protein bai from Drosophila persimilis (Fruit fly).